A 387-amino-acid chain; its full sequence is ERBB-3 BINDING PROTEIN 1 (387 aa).

2 necessary for nucleolar localization regions span residues 1–49 (MSDD…IVDL) and 297–387 (LLQP…PMEG). The segment at 47 to 55 (VDLCEKGDA) is RNA-binding. The interval 337–387 (LQPTKTTENEPEIKAWLALPTKTKKKGGGKKKKGKKGDKVEEASQAEPMEG) is disordered. Residues 356 to 373 (PTKTKKKGGGKKKKGKKG) form an interaction with RNA region. The span at 358–372 (KTKKKGGGKKKKGKK) shows a compositional bias: basic residues. Residues 360–369 (KKKGGGKKKK) carry the Nuclear localization signal motif.

It belongs to the peptidase M24 family. Component of a ribonucleoprotein complex. As to expression, expressed during tuberisation and in roots, nodes, internodes, petioles, leaves, stolons, tubers and sprouts.

It is found in the nucleus. Binds RNA. Associates with 28S, 18S and 5.8S mature rRNAs, several rRNA precursors and probably U3 small nucleolar RNA. May be involved in regulation of intermediate and late steps of rRNA processing. May be involved in ribosome assembly. Required for expression of cell cycle genes such as CYCD3-1, RNR2A and CDKB1-1. Promotes, in a dose- and auxin-dependent manner, organ growth by stimulating both cell proliferation and expansion, via the regulation of RBR1 levels. The polypeptide is ERBB-3 BINDING PROTEIN 1 (Solanum tuberosum (Potato)).